A 999-amino-acid chain; its full sequence is P3N-PIPO polyprotein (999 aa).

Residues 176–317 form the Peptidase S30 domain; it reads LKKAVGSGKV…LDNVYTIEHY (142 aa). Catalysis depends on for P1 proteinase activity residues His230, Glu239, and Ser271. An Involved in interaction with stylet and aphid transmission motif is present at residues 370-373; that stretch reads KLSC. Positions 626–628 match the Involved in virions binding and aphid transmission motif; it reads PTK. One can recognise a Peptidase C6 domain in the interval 652-774; sequence MYIAKEGYCY…EGEMKHYRVG (123 aa). Catalysis depends on for helper component proteinase activity residues Cys660 and His733.

This sequence belongs to the potyviridae P3N-PIPO polyprotein family. Interacts (via PIPO domain) with host PCaP1 protein; this interaction may help to anchor the movement complex to the plasma membrane from which the complex could move to the plasmodesmata. Post-translationally, potyviral RNA is expressed as two polyproteins which undergo post-translational proteolytic processing. Genome polyprotein is processed by NIa-pro, P1 and HC-pro proteinases resulting in the production of at least ten individual proteins. P3N-PIPO is cleaved by P1 and HC-pro proteinases resulting in the production of three individual proteins. The P1 proteinase and the HC-pro cleave only their respective C-termini autocatalytically.

Its subcellular location is the host cell junction. The protein localises to the host plasmodesma. The catalysed reaction is Hydrolyzes a Gly-|-Gly bond at its own C-terminus, commonly in the sequence -Tyr-Xaa-Val-Gly-|-Gly, in the processing of the potyviral polyprotein.. Its function is as follows. Required for aphid transmission and also has proteolytic activity. Only cleaves a Gly-Gly dipeptide at its own C-terminus. Interacts with virions and aphid stylets. Acts as a suppressor of RNA-mediated gene silencing, also known as post-transcriptional gene silencing (PTGS), a mechanism of plant viral defense that limits the accumulation of viral RNAs. May have RNA-binding activity. Functionally, allows efficient cell to cell propagation, by bypassing the host cell wall barrier. Transports viral genome to neighboring plant cells directly through plasmosdesmata, without any budding. The chain is P3N-PIPO polyprotein from Phaseolus vulgaris (Kidney bean).